The following is a 37-amino-acid chain: Large ribosomal subunit protein bL36 (37 aa).

Belongs to the bacterial ribosomal protein bL36 family.

The polypeptide is Large ribosomal subunit protein bL36 (Shewanella woodyi (strain ATCC 51908 / MS32)).